We begin with the raw amino-acid sequence, 498 residues long: GTPase Der (498 aa).

2 consecutive EngA-type G domains span residues 3–167 (PVVA…FDDL) and 210–383 (IKLA…KSAT). Residues 9 to 16 (GRPNVGKS), 57 to 61 (DTGGI), 119 to 122 (NKID), 216 to 223 (GRPNVGKS), 263 to 267 (DTAGV), and 328 to 331 (NKWD) each bind GTP. The KH-like domain occupies 384-468 (TRVGTSVLTR…PIRINFQNSE (85 aa)).

This sequence belongs to the TRAFAC class TrmE-Era-EngA-EngB-Septin-like GTPase superfamily. EngA (Der) GTPase family. As to quaternary structure, associates with the 50S ribosomal subunit.

GTPase that plays an essential role in the late steps of ribosome biogenesis. This chain is GTPase Der, found in Vibrio parahaemolyticus serotype O3:K6 (strain RIMD 2210633).